Here is a 315-residue protein sequence, read N- to C-terminus: Putative serine/threonine-protein phosphatase PP2A-4 catalytic subunit (315 aa).

Residues D63, H65, D91, and N123 each contribute to the Mn(2+) site. H124 (proton donor) is an active-site residue. Mn(2+) contacts are provided by H173 and H247.

It belongs to the PPP phosphatase family. PP-2A subfamily. Requires Mn(2+) as cofactor.

The protein localises to the cytoplasm. It carries out the reaction O-phospho-L-seryl-[protein] + H2O = L-seryl-[protein] + phosphate. The enzyme catalyses O-phospho-L-threonyl-[protein] + H2O = L-threonyl-[protein] + phosphate. This chain is Putative serine/threonine-protein phosphatase PP2A-4 catalytic subunit (PP2A4), found in Oryza sativa subsp. indica (Rice).